We begin with the raw amino-acid sequence, 131 residues long: Profilin (131 aa).

It belongs to the profilin family. In terms of assembly, occurs in many kinds of cells as a complex with monomeric actin in a 1:1 ratio.

It localises to the cytoplasm. The protein localises to the cytoskeleton. Its function is as follows. Binds to actin and affects the structure of the cytoskeleton. At high concentrations, profilin prevents the polymerization of actin, whereas it enhances it at low concentrations. By binding to PIP2, it inhibits the formation of IP3 and DG. This is Profilin from Citrus sinensis (Sweet orange).